The sequence spans 388 residues: Processive diacylglycerol beta-glucosyltransferase (388 aa).

The protein belongs to the glycosyltransferase 28 family. UgtP subfamily.

It localises to the cell membrane. The enzyme catalyses a 1,2-diacyl-3-O-(beta-D-glucopyranosyl)-sn-glycerol + UDP-alpha-D-glucose = a 1,2-diacyl-3-O-(beta-D-Glc-(1-&gt;6)-beta-D-Glc)-sn-glycerol + UDP + H(+). It carries out the reaction a 1,2-diacyl-3-O-(beta-D-Glc-(1-&gt;6)-beta-D-Glc)-sn-glycerol + UDP-alpha-D-glucose = a 1,2-diacyl-3-O-(beta-D-Glc-(1-&gt;6)-beta-D-Glc-(1-&gt;6)-beta-D-Glc)-sn-glycerol + UDP + H(+). The catalysed reaction is a 1,2-diacyl-sn-glycerol + UDP-alpha-D-glucose = a 1,2-diacyl-3-O-(beta-D-glucopyranosyl)-sn-glycerol + UDP + H(+). It participates in glycolipid metabolism; diglucosyl-diacylglycerol biosynthesis. Its function is as follows. Processive glucosyltransferase involved in the biosynthesis of both the bilayer- and non-bilayer-forming membrane glucolipids. Is able to successively transfer up to three glucosyl residues to diacylglycerol (DAG), thereby catalyzing the formation of beta-monoglucosyl-DAG (3-O-(beta-D-glucopyranosyl)-1,2-diacyl-sn-glycerol), beta-diglucosyl-DAG (3-O-(beta-D-glucopyranosyl-beta-(1-&gt;6)-D-glucopyranosyl)-1,2-diacyl-sn-glycerol) and beta-triglucosyl-DAG (3-O-(beta-D-glucopyranosyl-beta-(1-&gt;6)-D-glucopyranosyl-beta-(1-&gt;6)-D-glucopyranosyl)-1,2-diacyl-sn-glycerol). Beta-diglucosyl-DAG is the predominant glycolipid found in Bacillales and is also used as a membrane anchor for lipoteichoic acid (LTA). This is Processive diacylglycerol beta-glucosyltransferase from Bacillus mycoides (strain KBAB4) (Bacillus weihenstephanensis).